A 100-amino-acid polypeptide reads, in one-letter code: Class II hydrophobin FOXG_02746 (100 aa).

The signal sequence occupies residues 1-17 (MQFYTIVSLFLAGTAYA). 4 cysteine pairs are disulfide-bonded: C29/C79, C40/C70, C41/C53, and C80/C92.

Belongs to the cerato-ulmin hydrophobin family. Homodimer. Homodimers further self-assemble to form highly ordered films at water-air interfaces through intermolecular interactions.

It localises to the secreted. The protein resides in the cell wall. In terms of biological role, aerial growth, conidiation, and dispersal of filamentous fungi in the environment rely upon a capability of their secreting small amphipathic proteins called hydrophobins (HPBs) with low sequence identity. Class I can self-assemble into an outermost layer of rodlet bundles on aerial cell surfaces, conferring cellular hydrophobicity that supports fungal growth, development and dispersal; whereas Class II form highly ordered films at water-air interfaces through intermolecular interactions but contribute nothing to the rodlet structure. FOXG_02746 is a class II hydrophobin that is likely required for plant colonization. The protein is Class II hydrophobin FOXG_02746 of Fusarium oxysporum f. sp. lycopersici (strain 4287 / CBS 123668 / FGSC 9935 / NRRL 34936) (Fusarium vascular wilt of tomato).